Consider the following 505-residue polypeptide: Metalloprotease TIKI1 (505 aa).

A signal peptide spans 1–19 (MSPWSWFLLQTLCLLPTGA). The Extracellular portion of the chain corresponds to 20 to 477 (ASRRGAPGTA…RRGHSHHSQM (458 aa)). Residues N220, N229, N278, and N336 are each glycosylated (N-linked (GlcNAc...) asparagine). Positions 389–428 (PEAVSSGHSTLPPLVSRPGSADTPSEAEQRFRKKRRRSQR) are disordered. Over residues 419 to 428 (FRKKRRRSQR) the composition is skewed to basic residues. Residues 478–498 (VASSACLSLWTPVFWVLVLAF) form a helical membrane-spanning segment. The Cytoplasmic segment spans residues 499–505 (QTETPLL).

It belongs to the TIKI family. Requires Mn(2+) as cofactor. Co(2+) serves as cofactor.

It localises to the cell membrane. In terms of biological role, metalloprotease that acts as a negative regulator of the Wnt signaling pathway by mediating the cleavage of the 8 N-terminal residues of a subset of Wnt proteins. Following cleavage, Wnt proteins become oxidized and form large disulfide-bond oligomers, leading to their inactivation. Able to cleave WNT3A, WNT5, but not WNT11. Required for head formation. The chain is Metalloprotease TIKI1 (TRABD2A) from Homo sapiens (Human).